A 208-amino-acid polypeptide reads, in one-letter code: GATA transcription factor 29 (208 aa).

A GATA-type; atypical zinc finger spans residues 155-208; sequence GMKKCTNMNCNALNTPMWRRGPLGPKSLCNACGIKFRKEEERKAKRNVVIVLDD.

It belongs to the type IV zinc-finger family. Class B subfamily.

The protein resides in the nucleus. Functionally, transcriptional regulator that specifically binds 5'-GATA-3' or 5'-GAT-3' motifs within gene promoters. In Arabidopsis thaliana (Mouse-ear cress), this protein is GATA transcription factor 29 (GATA29).